Consider the following 174-residue polypeptide: 3-hydroxyanthranilate 3,4-dioxygenase (174 aa).

Arginine 47 provides a ligand contact to O2. Fe cation is bound by residues histidine 51, glutamate 57, and histidine 95. Glutamate 57 provides a ligand contact to substrate. 2 residues coordinate substrate: arginine 99 and glutamate 110. Positions 125, 128, 162, and 165 each coordinate Fe cation.

This sequence belongs to the 3-HAO family. As to quaternary structure, homodimer. The cofactor is Fe(2+).

The catalysed reaction is 3-hydroxyanthranilate + O2 = (2Z,4Z)-2-amino-3-carboxymuconate 6-semialdehyde. It functions in the pathway cofactor biosynthesis; NAD(+) biosynthesis; quinolinate from L-kynurenine: step 3/3. Its function is as follows. Catalyzes the oxidative ring opening of 3-hydroxyanthranilate to 2-amino-3-carboxymuconate semialdehyde, which spontaneously cyclizes to quinolinate. The chain is 3-hydroxyanthranilate 3,4-dioxygenase from Burkholderia lata (strain ATCC 17760 / DSM 23089 / LMG 22485 / NCIMB 9086 / R18194 / 383).